The primary structure comprises 93 residues: MNINEIKRKIIPILLKHGVKRASIFGSYARNEQKETSDIDILVEFGEGKSLLDLVRLKYELEEVLGKEVDVLTYNSIHPLLKDRILNEAVDVL.

The short motif at 26 to 40 is the GSX(10)DXD motif element; sequence GSYARNEQKETSDID. Mg(2+) is bound by residues Asp38, Asp40, and Asp70.

The protein belongs to the MntA antitoxin family. As to quaternary structure, probably forms a complex with cognate toxin MJ0434. Mg(2+) serves as cofactor.

The catalysed reaction is L-tyrosyl-[protein] + ATP = O-(5'-adenylyl)-L-tyrosyl-[protein] + diphosphate. The enzyme catalyses O-(5'-adenylyl)-L-tyrosyl-[protein] + ATP = O-[5'-(adenylyl-(5'-&gt;3')-adenylyl)]-L-tyrosyl-[protein] + diphosphate. Probable antitoxin component of a putative type VII toxin-antitoxin (TA) system. Neutralizes cognate toxic MJ0434 by di-AMPylation. The sequence is that of Putative protein adenylyltransferase MJ0435 from Methanocaldococcus jannaschii (strain ATCC 43067 / DSM 2661 / JAL-1 / JCM 10045 / NBRC 100440) (Methanococcus jannaschii).